A 106-amino-acid chain; its full sequence is Small ribosomal subunit protein bS18 (106 aa).

Residues Met1 to Ser32 form a disordered region. The segment covering Met7–Gly21 has biased composition (basic and acidic residues).

The protein belongs to the bacterial ribosomal protein bS18 family. In terms of assembly, part of the 30S ribosomal subunit. Forms a tight heterodimer with protein bS6.

Its function is as follows. Binds as a heterodimer with protein bS6 to the central domain of the 16S rRNA, where it helps stabilize the platform of the 30S subunit. This is Small ribosomal subunit protein bS18 from Magnetococcus marinus (strain ATCC BAA-1437 / JCM 17883 / MC-1).